The sequence spans 255 residues: Triosephosphate isomerase (255 aa).

A substrate-binding site is contributed by 9–11 (NWK). Residue histidine 96 is the Electrophile of the active site. Glutamate 168 serves as the catalytic Proton acceptor. Substrate is bound by residues glycine 174 and serine 213.

This sequence belongs to the triosephosphate isomerase family. As to quaternary structure, homodimer.

The protein resides in the cytoplasm. The enzyme catalyses D-glyceraldehyde 3-phosphate = dihydroxyacetone phosphate. Its pathway is carbohydrate biosynthesis; gluconeogenesis. It functions in the pathway carbohydrate degradation; glycolysis; D-glyceraldehyde 3-phosphate from glycerone phosphate: step 1/1. Its function is as follows. Involved in the gluconeogenesis. Catalyzes stereospecifically the conversion of dihydroxyacetone phosphate (DHAP) to D-glyceraldehyde-3-phosphate (G3P). In Buchnera aphidicola subsp. Acyrthosiphon pisum (strain APS) (Acyrthosiphon pisum symbiotic bacterium), this protein is Triosephosphate isomerase.